Consider the following 205-residue polypeptide: 7-methyl-GTP pyrophosphatase (205 aa).

The active-site Proton acceptor is the D79.

This sequence belongs to the Maf family. YceF subfamily. Requires a divalent metal cation as cofactor.

The protein localises to the cytoplasm. It carries out the reaction N(7)-methyl-GTP + H2O = N(7)-methyl-GMP + diphosphate + H(+). Nucleoside triphosphate pyrophosphatase that hydrolyzes 7-methyl-GTP (m(7)GTP). May have a dual role in cell division arrest and in preventing the incorporation of modified nucleotides into cellular nucleic acids. This Paraburkholderia xenovorans (strain LB400) protein is 7-methyl-GTP pyrophosphatase.